A 238-amino-acid polypeptide reads, in one-letter code: uncharacterized protein (238 aa).

It belongs to the chlamydial CPn_0658/CT_538/TC_0825 family.

This is an uncharacterized protein from Chlamydia trachomatis serovar D (strain ATCC VR-885 / DSM 19411 / UW-3/Cx).